A 51-amino-acid chain; its full sequence is Bacteriocin aureocin A53 (51 aa).

An N-formylmethionine modification is found at M1.

It localises to the secreted. In terms of biological role, antibacterial peptide active against a broad range of lactic acid bacteria, L.monocytogenes and many epidemiologically unrelated strains of S.aureus involved in bovine mastitis. The sequence is that of Bacteriocin aureocin A53 (aucA) from Staphylococcus aureus.